The primary structure comprises 671 residues: DNA ligase (671 aa).

NAD(+)-binding positions include 32–36 (DAEYD), 81–82 (SL), and Glu-113. Catalysis depends on Lys-115, which acts as the N6-AMP-lysine intermediate. 4 residues coordinate NAD(+): Arg-136, Glu-173, Lys-290, and Lys-314. Residues Cys-408, Cys-411, Cys-426, and Cys-432 each contribute to the Zn(2+) site. The BRCT domain occupies 593–671 (EIDSPFAGKT…ETEMLRLLGS (79 aa)).

The protein belongs to the NAD-dependent DNA ligase family. LigA subfamily. Mg(2+) is required as a cofactor. Requires Mn(2+) as cofactor.

The enzyme catalyses NAD(+) + (deoxyribonucleotide)n-3'-hydroxyl + 5'-phospho-(deoxyribonucleotide)m = (deoxyribonucleotide)n+m + AMP + beta-nicotinamide D-nucleotide.. Functionally, DNA ligase that catalyzes the formation of phosphodiester linkages between 5'-phosphoryl and 3'-hydroxyl groups in double-stranded DNA using NAD as a coenzyme and as the energy source for the reaction. It is essential for DNA replication and repair of damaged DNA. The sequence is that of DNA ligase from Escherichia coli O81 (strain ED1a).